Consider the following 355-residue polypeptide: Sesquiterpene synthase-like protein Agr11 (355 aa).

This sequence belongs to the terpene synthase family.

The polypeptide is Sesquiterpene synthase-like protein Agr11 (Cyclocybe aegerita (Black poplar mushroom)).